The chain runs to 387 residues: [LysW]-aminoadipate semialdehyde/glutamate semialdehyde transaminase (387 aa).

Residues 96 to 97 and Phe-123 each bind pyridoxal 5'-phosphate; that span reads GT. Substrate is bound at residue Arg-126. 207–210 contributes to the pyridoxal 5'-phosphate binding site; it reads DEVQ. Lys-236 is subject to N6-(pyridoxal phosphate)lysine. A substrate-binding site is contributed by Ser-264. Thr-265 serves as a coordination point for pyridoxal 5'-phosphate.

It belongs to the class-III pyridoxal-phosphate-dependent aminotransferase family. LysJ subfamily. As to quaternary structure, homodimer. Requires pyridoxal 5'-phosphate as cofactor.

The protein resides in the cytoplasm. The enzyme catalyses [amino-group carrier protein]-C-terminal-gamma-(L-lysyl)-L-glutamate + 2-oxoglutarate = [amino-group carrier protein]-C-terminal-N-(1-carboxy-5-oxopentan-1-yl)-L-glutamine + L-glutamate. It carries out the reaction [amino-group carrier protein]-C-terminal-gamma-(L-ornithyl)-L-glutamate + 2-oxoglutarate = [amino-group carrier protein]-C-terminal-gamma-(L-glutamyl-5-semialdehyde)-L-glutamate + L-glutamate. Its pathway is amino-acid biosynthesis; L-lysine biosynthesis via AAA pathway; L-lysine from L-alpha-aminoadipate (Thermus route): step 4/5. It participates in amino-acid biosynthesis; L-arginine biosynthesis. Functionally, involved in both the arginine and lysine biosynthetic pathways. This chain is [LysW]-aminoadipate semialdehyde/glutamate semialdehyde transaminase, found in Sulfurisphaera tokodaii (strain DSM 16993 / JCM 10545 / NBRC 100140 / 7) (Sulfolobus tokodaii).